The sequence spans 250 residues: ATP synthase subunit a (250 aa).

The next 5 membrane-spanning stretches (helical) occupy residues 27–47 (TDTV…AFYL), 83–103 (IAPF…ISNW), 129–149 (INYV…AGIW), 191–211 (IFAG…IMWA), and 219–239 (FDLF…ILYF).

Belongs to the ATPase A chain family. As to quaternary structure, F-type ATPases have 2 components, CF(1) - the catalytic core - and CF(0) - the membrane proton channel. CF(1) has five subunits: alpha(3), beta(3), gamma(1), delta(1), epsilon(1). CF(0) has three main subunits: a(1), b(2) and c(9-12). The alpha and beta chains form an alternating ring which encloses part of the gamma chain. CF(1) is attached to CF(0) by a central stalk formed by the gamma and epsilon chains, while a peripheral stalk is formed by the delta and b chains.

Its subcellular location is the cell membrane. In terms of biological role, key component of the proton channel; it plays a direct role in the translocation of protons across the membrane. This chain is ATP synthase subunit a, found in Mycobacterium ulcerans (strain Agy99).